The sequence spans 164 residues: Protein-export protein SecB (164 aa).

This sequence belongs to the SecB family. In terms of assembly, homotetramer, a dimer of dimers. One homotetramer interacts with 1 SecA dimer.

It is found in the cytoplasm. In terms of biological role, one of the proteins required for the normal export of preproteins out of the cell cytoplasm. It is a molecular chaperone that binds to a subset of precursor proteins, maintaining them in a translocation-competent state. It also specifically binds to its receptor SecA. The chain is Protein-export protein SecB from Herminiimonas arsenicoxydans.